Consider the following 179-residue polypeptide: Peptidyl-tRNA hydrolase (179 aa).

Residue Y15 coordinates tRNA. The active-site Proton acceptor is H20. TRNA contacts are provided by Y66, N68, and N114.

The protein belongs to the PTH family. In terms of assembly, monomer.

It is found in the cytoplasm. The catalysed reaction is an N-acyl-L-alpha-aminoacyl-tRNA + H2O = an N-acyl-L-amino acid + a tRNA + H(+). In terms of biological role, hydrolyzes ribosome-free peptidyl-tRNAs (with 1 or more amino acids incorporated), which drop off the ribosome during protein synthesis, or as a result of ribosome stalling. Functionally, catalyzes the release of premature peptidyl moieties from peptidyl-tRNA molecules trapped in stalled 50S ribosomal subunits, and thus maintains levels of free tRNAs and 50S ribosomes. This is Peptidyl-tRNA hydrolase from Chlamydia muridarum (strain MoPn / Nigg).